Consider the following 514-residue polypeptide: GMP synthase [glutamine-hydrolyzing] (514 aa).

In terms of domain architecture, Glutamine amidotransferase type-1 spans 9-199 (MILVLDFGGQ…LFEVCQCTGD (191 aa)). C86 acts as the Nucleophile in catalysis. Active-site residues include H173 and E175. The 190-residue stretch at 200-389 (WSMENFIEIE…LGLSDEIVWR (190 aa)) folds into the GMPS ATP-PPase domain. ATP is bound at residue 227 to 233 (SGGVDSS).

In terms of assembly, homodimer.

The enzyme catalyses XMP + L-glutamine + ATP + H2O = GMP + L-glutamate + AMP + diphosphate + 2 H(+). The protein operates within purine metabolism; GMP biosynthesis; GMP from XMP (L-Gln route): step 1/1. Its function is as follows. Catalyzes the synthesis of GMP from XMP. The protein is GMP synthase [glutamine-hydrolyzing] of Exiguobacterium sibiricum (strain DSM 17290 / CCUG 55495 / CIP 109462 / JCM 13490 / 255-15).